Reading from the N-terminus, the 288-residue chain is Probable ketoamine kinase VC_1539 (288 aa).

Position 92–94 (92–94 (NYL)) interacts with ATP. Aspartate 195 serves as the catalytic Proton acceptor.

This sequence belongs to the fructosamine kinase family.

Ketoamine kinase that phosphorylates ketoamines on the third carbon of the sugar moiety to generate ketoamine 3-phosphate. In Vibrio cholerae serotype O1 (strain ATCC 39315 / El Tor Inaba N16961), this protein is Probable ketoamine kinase VC_1539.